Here is a 203-residue protein sequence, read N- to C-terminus: Imidazoleglycerol-phosphate dehydratase (203 aa).

This sequence belongs to the imidazoleglycerol-phosphate dehydratase family.

The protein localises to the cytoplasm. The catalysed reaction is D-erythro-1-(imidazol-4-yl)glycerol 3-phosphate = 3-(imidazol-4-yl)-2-oxopropyl phosphate + H2O. It participates in amino-acid biosynthesis; L-histidine biosynthesis; L-histidine from 5-phospho-alpha-D-ribose 1-diphosphate: step 6/9. This is Imidazoleglycerol-phosphate dehydratase from Parvibaculum lavamentivorans (strain DS-1 / DSM 13023 / NCIMB 13966).